Reading from the N-terminus, the 393-residue chain is Acetate kinase (393 aa).

Asn-7 provides a ligand contact to Mg(2+). Lys-14 contacts ATP. Position 90 (Arg-90) interacts with substrate. The Proton donor/acceptor role is filled by Asp-147. ATP is bound by residues 205–209, 280–282, and 328–332; these read HLGNG, DFR, and GIGEN. Glu-380 is a Mg(2+) binding site.

It belongs to the acetokinase family. In terms of assembly, homodimer. The cofactor is Mg(2+). Mn(2+) serves as cofactor.

It localises to the cytoplasm. It catalyses the reaction acetate + ATP = acetyl phosphate + ADP. The protein operates within metabolic intermediate biosynthesis; acetyl-CoA biosynthesis; acetyl-CoA from acetate: step 1/2. Functionally, catalyzes the formation of acetyl phosphate from acetate and ATP. Can also catalyze the reverse reaction. This chain is Acetate kinase, found in Finegoldia magna (strain ATCC 29328 / DSM 20472 / WAL 2508) (Peptostreptococcus magnus).